Consider the following 228-residue polypeptide: Methyltransferase verB (228 aa).

The protein belongs to the methyltransferase superfamily.

The protein operates within secondary metabolite biosynthesis; terpenoid biosynthesis. Its pathway is mycotoxin biosynthesis. Methyltransferase; part of the gene cluster that mediates the biosynthesis of the neurotoxin verrucosidin, a methylated alpha-pyrone polyketide that inhibits oxidative phosphorylation in mitochondria and thereby causes neurological diseases. The carbon backbone of verrucosidin is synthesized by the HR-PKS verA, and further modified by the other verrucodidin cluster enzymes. This chain is Methyltransferase verB, found in Penicillium polonicum.